The sequence spans 701 residues: F-box/LRR-repeat protein 17 (701 aa).

The span at 1–11 shows a compositional bias: basic and acidic residues; sequence MGHLLSKEPRN. 3 disordered regions span residues 1–20, 72–94, and 227–300; these read MGHLLSKEPRNRPSQKRPRC, APAGPEEEPPLSPPPRDGAYAAA, and GGGG…DADC. The span at 227–237 shows a compositional bias: gly residues; the sequence is GGGGGPAGGGA. Residues 252-264 are compositionally biased toward pro residues; it reads EQPPQPLCPPPSS. Residues 318 to 365 enclose the F-box domain; it reads TPDINQLPPSILLKIFSNLSLDERCLSASLVCKYWRDLCLDFQFWKQL.

This sequence belongs to the FBXL17 family. In terms of assembly, part of the SCF (SKP1-CUL1-F-box) E3 ubiquitin-protein ligase complex SCF(FBXL17) composed of CUL1, SKP1, RBX1 and FBXL17. Interacts with BTB domain-containing proteins such as KLHL12, BCL6 and BACH1; specifically recognizes and binds a conserved degron of non-consecutive residues present at the interface of BTB dimers of aberrant composition. Interacts with SUFU. Interacts with PRMT1.

It localises to the cytoplasm. The protein localises to the nucleus. Functionally, substrate-recognition component of the SCF(FBXL17) E3 ubiquitin ligase complex, a key component of a quality control pathway required to ensure functional dimerization of BTB domain-containing proteins (dimerization quality control, DQC). FBXL17 specifically recognizes and binds a conserved degron of non-consecutive residues present at the interface of BTB dimers of aberrant composition: aberrant BTB dimer are then ubiquitinated by the SCF(FBXL17) complex and degraded by the proteasome. The ability of the SCF(FBXL17) complex to eliminate compromised BTB dimers is required for the differentiation and survival of neural crest and neuronal cells. The SCF(FBXL17) complex mediates ubiquitination and degradation of BACH1. The SCF(FBXL17) complex is also involved in the regulation of the hedgehog/smoothened (Hh) signaling pathway by mediating the ubiquitination and degradation of SUFU, allowing the release of GLI1 from SUFU for proper Hh signal transduction. The SCF(FBXL17) complex mediates ubiquitination and degradation of PRMT1. This Homo sapiens (Human) protein is F-box/LRR-repeat protein 17.